Here is a 406-residue protein sequence, read N- to C-terminus: E3 ubiquitin-protein ligase RING1 (406 aa).

Position 24 is a phosphothreonine (Thr-24). Residues 30 to 234 (MDGTEIAVSP…GGAGSEDSGD (205 aa)) form a necessary for transcriptional repression region. Ser-38 is subject to Phosphoserine. The segment at 48 to 88 (CPICLDMLKNTMTTKECLHRFCSDCIVTALRSGNKECPTCR) adopts an RING-type zinc-finger fold. Residues Ser-140, Ser-187, and Ser-190 each carry the phosphoserine modification. Disordered regions lie at residues 151-263 (HRAQ…GEIE) and 309-354 (QQQE…PSLE). The span at 175–187 (EPGEGEGDGEDIS) shows a compositional bias: acidic residues. The Nuclear localization signal signature appears at 201 to 204 (KRPR). A compositionally biased stretch (gly residues) spans 205–228 (GGGAGGSSVGTGGGAAGGACGGAG). Thr-215 bears the Phosphothreonine mark. Ser-229 and Ser-232 each carry phosphoserine. Residues 230-406 (EDSGDRGGTL…LCYAPTKDPK (177 aa)) are necessary for interaction with CBX2. Positions 235–244 (RGGTLGGGTL) are enriched in gly residues. Residues 246–258 (PPSPPGAPSPPEP) show a composition bias toward pro residues. Ser-248 and Ser-254 each carry phosphoserine. The segment covering 317 to 343 (GGPGGGASDTGGPDGGGGERGVSGGGE) has biased composition (gly residues).

As to quaternary structure, component of chromatin-associated Polycomb (PcG) complexes. Part of the E2F6.com-1 complex in G0 phase composed of E2F6, MGA, MAX, TFDP1, CBX3, BAT8, EUHMTASE1, RING1, RNF2/RING2 MBLR, L3MBTL2 and YAF2. Interacts with CBX2 and PCGF6. Component of a PRC1-like complex. Component of repressive BCOR complex containing Polycomb group subcomplex at least composed of RYBP, PCGF1, BCOR and RNF2/RING2. Interacts with BMI1, PHC2, PCGF2, RNF2; CBX6, CBX7 and CBX8. Interacts with MN1. Interacts with USP26.

It is found in the nucleus speckle. The enzyme catalyses S-ubiquitinyl-[E2 ubiquitin-conjugating enzyme]-L-cysteine + [acceptor protein]-L-lysine = [E2 ubiquitin-conjugating enzyme]-L-cysteine + N(6)-ubiquitinyl-[acceptor protein]-L-lysine.. It participates in protein modification; protein ubiquitination. Its function is as follows. Constitutes one of the E3 ubiquitin-protein ligases that mediate monoubiquitination of 'Lys-119' of histone H2A, thereby playing a central role in histone code and gene regulation. H2A 'Lys-119' ubiquitination gives a specific tag for epigenetic transcriptional repression and participates in X chromosome inactivation of female mammals. Essential component of a Polycomb group (PcG) multiprotein PRC1-like complex, a complex class required to maintain the transcriptionally repressive state of many genes, including Hox genes, throughout development. PcG PRC1 complex acts via chromatin remodeling and modification of histones, rendering chromatin heritably changed in its expressibility. Compared to RNF2/RING2, it does not have the main E3 ubiquitin ligase activity on histone H2A, and it may rather act as a modulator of RNF2/RING2 activity. The protein is E3 ubiquitin-protein ligase RING1 of Rattus norvegicus (Rat).